The primary structure comprises 502 residues: Probable cytochrome P450 6a23 (502 aa).

Cys-445 is a binding site for heme.

This sequence belongs to the cytochrome P450 family. Requires heme as cofactor.

The protein resides in the endoplasmic reticulum membrane. It is found in the microsome membrane. Its function is as follows. May be involved in the metabolism of insect hormones and in the breakdown of synthetic insecticides. This is Probable cytochrome P450 6a23 (Cyp6a23) from Drosophila melanogaster (Fruit fly).